Here is a 1161-residue protein sequence, read N- to C-terminus: MVNISIVAGIVALATSAAAITATTTLSPYDERVNLIELAVYVSDIRAHIFQYYSFRNHHKTETYPSEIAAAVFDYGDFTTRLTGISGDEVTRMITGVPWYSTRLKPAISSALSKDGIYTAIPTSTSTTTTKSSTSTTPTTTITSTTSTTSTTPTTSTTSTTPTTSTTSTTPTTSTTSTTPTTSTTSTTPTTSTTSTTPTTSTTSTTPTTSTTSTTPTTSTTSTTPTTSTTPTTSTTSTTSQTSTKSTTPTTSSTSTTPTTSTTPTTSTTSTAPTTSTTSTTSTTSTISTAPTTSTTSSTFSTSSASASSVISTTATTSTTFASLTTPATSTASTDHTTSSVSTTNAFTTSATTTTTSDTYISSSSPSQVTSSAEPTTVSEVTSSVEPTRSSQVTSSAEPTTVSEFTSSVEPTRSSQVTSSAEPTTVSEFTSSVEPTRSSQVTSSAEPTTVSEFTSSVEPTRSSQVTSSAEPTTVSEFTSSVEPTRSSQVTSSAEPTTVSEFTSSVEPIRSSQVTSSAEPTTVSEVTSSVEPIRSSQVTTTEPVSSFGSTFSEITSSAEPLSFSKATTSAESISSNQITISSELIVSSVITSSSEIPSSIEVLTSSGISSSVEPTSLVGPSSDESISSTESLSATSTFTSAVVSSSKAADFFTRSTVSAKSDVSGNSSTQSTTFFATPSTPLAVSSTVVTSSTDSVSPNIPFSEISSSPESSTAITSTSTSFIAERTSSLYLSSSNMSSFTLSTFTVSQSIVSSFSMEPTSSVASFASSSPLLVSSRSNCSDARSSNTISSGLFSTIENVRNATSTFTNLSTDEIVITSCKSSCTNEDSVLTKTQVSTVETTITSCSGGICTTLMSPVTTINAKANTLTTTETSTVETTITTCPGGVCSTLTVPVTTITSEATTTATISCEDNEEDITSTETELLTLETTITSCSGGICTTLMSPVTTINAKANTLTTTETSTVETTITTCSGGVCSTLTVPVTTITSEATTTATISCEDNEEDVASTKTELLTMETTITSCSGGICTTLMSPVSSFNSKATTSNNAESTIPKAIKVSCSAGACTTLTTVDAGISMFTRTGLSITQTTVTNCSGGTCTMLTAPIATATSKVISPIPKASSATSIAHSSASYTVSINTNGAYNFDKDNIFGTAIVAVVALLLL.

A signal peptide spans 1–19; it reads MVNISIVAGIVALATSAAA. Disordered regions lie at residues 123-309, 326-345, 354-547, and 691-713; these read TSTS…SASS, TPAT…STTN, TTTS…SSFG, and STDS…SSTA. The segment at 134 to 286 is 46 X 3 AA tandem repeats of T-[SP]-T; that stretch reads TSTTPTTTIT…TTSTTSTTST (153 aa). The span at 354-372 shows a compositional bias: low complexity; sequence TTTSDTYISSSSPSQVTSS. 14 repeat units span residues 373–384, 385–396, 397–408, 409–420, 421–432, 433–444, 445–456, 457–468, 469–480, 481–492, 493–504, 505–516, 517–528, and 529–540. The interval 373–540 is 14 X 12 AA approximate tandem repeats; it reads AEPTTVSEVT…PIRSSQVTTT (168 aa). The segment covering 373–547 has biased composition (polar residues); it reads AEPTTVSEVT…TTTEPVSSFG (175 aa). 2 repeat units span residues 826–913 and 914–1001. Residues 826–1040 form a 2.5 X 88 AA approximate tandem repeats region; it reads EDSVLTKTQV…SPVSSFNSKA (215 aa). One copy of the 2-3; truncated repeat lies at 1002–1040; sequence EDVASTKTELLTMETTITSCSGGICTTLMSPVSSFNSKA. Asn-1137 carries the GPI-anchor amidated asparagine lipid modification. A propeptide spans 1138–1161 (removed in mature form); that stretch reads GAYNFDKDNIFGTAIVAVVALLLL.

This sequence belongs to the SRP1/TIP1 family. Post-translationally, extensively O-glycosylated. In terms of processing, the GPI-anchor is attached to the protein in the endoplasmic reticulum and serves to target the protein to the cell surface. There, the glucosamine-inositol phospholipid moiety is cleaved off and the GPI-modified mannoprotein is covalently attached via its lipidless GPI glycan remnant to the 1,6-beta-glucan of the outer cell wall layer.

The protein localises to the secreted. It is found in the cell wall. It localises to the cell membrane. Functionally, component of the cell wall. The polypeptide is Cell wall protein DAN4 (Saccharomyces cerevisiae (strain ATCC 204508 / S288c) (Baker's yeast)).